The primary structure comprises 434 residues: Lecithin-cholesterol acyltransferase-like 1 (434 aa).

Ser191 functions as the Acyl-ester intermediate in the catalytic mechanism. Catalysis depends on charge relay system residues Asp354 and His386.

This sequence belongs to the AB hydrolase superfamily. Lipase family.

This chain is Lecithin-cholesterol acyltransferase-like 1, found in Oryza sativa subsp. japonica (Rice).